Consider the following 425-residue polypeptide: Serine--tRNA ligase (425 aa).

L-serine is bound at residue 233–235 (TAE). 264 to 266 (RRE) serves as a coordination point for ATP. Glutamate 287 provides a ligand contact to L-serine. 351-354 (EISS) serves as a coordination point for ATP. Residue serine 385 participates in L-serine binding.

This sequence belongs to the class-II aminoacyl-tRNA synthetase family. Type-1 seryl-tRNA synthetase subfamily. In terms of assembly, homodimer. The tRNA molecule binds across the dimer.

Its subcellular location is the cytoplasm. The catalysed reaction is tRNA(Ser) + L-serine + ATP = L-seryl-tRNA(Ser) + AMP + diphosphate + H(+). The enzyme catalyses tRNA(Sec) + L-serine + ATP = L-seryl-tRNA(Sec) + AMP + diphosphate + H(+). It participates in aminoacyl-tRNA biosynthesis; selenocysteinyl-tRNA(Sec) biosynthesis; L-seryl-tRNA(Sec) from L-serine and tRNA(Sec): step 1/1. Functionally, catalyzes the attachment of serine to tRNA(Ser). Is also able to aminoacylate tRNA(Sec) with serine, to form the misacylated tRNA L-seryl-tRNA(Sec), which will be further converted into selenocysteinyl-tRNA(Sec). This chain is Serine--tRNA ligase, found in Synechococcus sp. (strain CC9902).